The following is a 594-amino-acid chain: Spermidine/putrescine import ATP-binding protein PotA (594 aa).

The region spanning 24–435 (IEIKKINKTY…PANNWVANFI (412 aa)) is the ABC transporter domain. 57-64 (GPSGCGKT) serves as a coordination point for ATP. Residues 125–304 (RKPIENVSAD…EWFDKKKLTR (180 aa)) are insert.

It belongs to the ABC transporter superfamily. Spermidine/putrescine importer (TC 3.A.1.11.1) family. As to quaternary structure, the complex is composed of two ATP-binding proteins (PotA), two transmembrane proteins (PotB and PotC) and a solute-binding protein (PotD).

The protein localises to the cell membrane. It catalyses the reaction ATP + H2O + polyamine-[polyamine-binding protein]Side 1 = ADP + phosphate + polyamineSide 2 + [polyamine-binding protein]Side 1.. In terms of biological role, part of the ABC transporter complex PotABCD involved in spermidine/putrescine import. Responsible for energy coupling to the transport system. This chain is Spermidine/putrescine import ATP-binding protein PotA, found in Malacoplasma penetrans (strain HF-2) (Mycoplasma penetrans).